We begin with the raw amino-acid sequence, 458 residues long: Repulsive guidance molecule A (458 aa).

Residues 1–53 (MGGPGPRRAGTSRERLVVTGRAGWMGMGRGAGRSALGFWPTLAFLLCSFPAAT) form the signal peptide. Residues 54-176 (SPCKILKCNS…NYTHCGLFGD (123 aa)) constitute a propeptide, removed in mature form. A compositionally biased stretch (polar residues) spans 121 to 133 (HNCSKDGPTSQPR). The interval 121–149 (HNCSKDGPTSQPRLHTLPPAGDSQERSDS) is disordered. N-linked (GlcNAc...) asparagine glycosylation is found at N122 and N167. Intrachain disulfides connect C153-C234 and C171-C323. The N-linked (GlcNAc...) asparagine glycan is linked to N397. A433 carries GPI-anchor amidated alanine lipidation. A propeptide spans 434–458 (AGLPLAPQPLLGALILLLALFPVFC) (removed in mature form).

Belongs to the repulsive guidance molecule (RGM) family. As to quaternary structure, interacts with NEO1, BMP2 and BMP4. Post-translationally, autocatalytically cleaved at low pH; the two chains remain linked via two disulfide bonds.

The protein localises to the cell membrane. Its function is as follows. Member of the repulsive guidance molecule (RGM) family that performs several functions in the developing and adult nervous system. Regulates cephalic neural tube closure, inhibits neurite outgrowth and cortical neuron branching, and the formation of mature synapses. Binding to its receptor NEO1/neogenin induces activation of RHOA-ROCK1/Rho-kinase signaling pathway through UNC5B-ARHGEF12/LARG-PTK2/FAK1 cascade, leading to collapse of the neuronal growth cone and neurite outgrowth inhibition. Furthermore, RGMA binding to NEO1/neogenin leads to HRAS inactivation by influencing HRAS-PTK2/FAK1-AKT1 pathway. It also functions as a bone morphogenetic protein (BMP) coreceptor that may signal through SMAD1, SMAD5, and SMAD8. The polypeptide is Repulsive guidance molecule A (RGMA) (Macaca fascicularis (Crab-eating macaque)).